A 222-amino-acid chain; its full sequence is Voltage-dependent calcium channel gamma-1 subunit (222 aa).

Over 1-10 the chain is Cytoplasmic; the sequence is MSQTKMLKVR. A helical transmembrane segment spans residues 11–29; it reads VTLFCILAGIVLAMTAVVT. Residues 30–108 are Extracellular-facing; the sequence is DHWAVLSPHM…TQKEYSISAA (79 aa). Residues Asn43 and Asn79 are each glycosylated (N-linked (GlcNAc...) asparagine). Cys57 and Cys80 form a disulfide bridge. The chain crosses the membrane as a helical span at residues 109–129; sequence AIAIFSLGFIILGSLCVLLSL. Topologically, residues 130–134 are cytoplasmic; it reads GKKRD. A helical transmembrane segment spans residues 135 to 155; sequence YLLRPASMFYAFAGLCILVSV. Topologically, residues 156-179 are extracellular; it reads EVMRQSVKRMIDSEDTVWIEYYYS. The helical transmembrane segment at 180–204 threads the bilayer; that stretch reads WSFACACAAFILLFLGGLALLLFSL. Topologically, residues 205-222 are cytoplasmic; sequence PRMPRNPWESCMDAEPEH.

Belongs to the PMP-22/EMP/MP20 family. CACNG subfamily. Component of a calcium channel complex consisting of a pore-forming alpha subunit (CACNA1S) and the ancillary subunits CACNB1 or CACNB2, CACNG1 and CACNA2D1. The channel complex contains alpha, beta, gamma and delta subunits in a 1:1:1:1 ratio, i.e. it contains either CACNB1 or CACNB2. N-glycosylated. Skeletal muscle.

It localises to the cell membrane. It is found in the sarcolemma. In terms of biological role, regulatory subunit of the voltage-gated calcium channel that gives rise to L-type calcium currents in skeletal muscle. Regulates channel inactivation kinetics. The chain is Voltage-dependent calcium channel gamma-1 subunit (CACNG1) from Homo sapiens (Human).